The primary structure comprises 516 residues: 2,3-bisphosphoglycerate-independent phosphoglycerate mutase (516 aa).

Residues Asp14 and Ser64 each coordinate Mn(2+). The active-site Phosphoserine intermediate is Ser64. Substrate contacts are provided by residues His125, 155-156 (RD), Arg187, Arg193, 263-266 (RPDR), and Lys337. Mn(2+) contacts are provided by Asp404, His408, Asp445, His446, and His464.

This sequence belongs to the BPG-independent phosphoglycerate mutase family. Monomer. The cofactor is Mn(2+).

The catalysed reaction is (2R)-2-phosphoglycerate = (2R)-3-phosphoglycerate. Its pathway is carbohydrate degradation; glycolysis; pyruvate from D-glyceraldehyde 3-phosphate: step 3/5. Functionally, catalyzes the interconversion of 2-phosphoglycerate and 3-phosphoglycerate. This Saccharophagus degradans (strain 2-40 / ATCC 43961 / DSM 17024) protein is 2,3-bisphosphoglycerate-independent phosphoglycerate mutase.